The chain runs to 344 residues: L-threonine 3-dehydrogenase (344 aa).

Cys42 contacts Zn(2+). Catalysis depends on charge relay system residues Thr44 and His47. His67, Glu68, Cys97, Cys100, Cys103, and Cys111 together coordinate Zn(2+). NAD(+) contacts are provided by residues Ile179, Asp199, Arg204, 266–268 (LGI), and 290–291 (IY).

Belongs to the zinc-containing alcohol dehydrogenase family. As to quaternary structure, homotetramer. Requires Zn(2+) as cofactor.

Its subcellular location is the cytoplasm. It catalyses the reaction L-threonine + NAD(+) = (2S)-2-amino-3-oxobutanoate + NADH + H(+). It participates in amino-acid degradation; L-threonine degradation via oxydo-reductase pathway; glycine from L-threonine: step 1/2. Catalyzes the NAD(+)-dependent oxidation of L-threonine to 2-amino-3-ketobutyrate. The sequence is that of L-threonine 3-dehydrogenase from Mesorhizobium japonicum (strain LMG 29417 / CECT 9101 / MAFF 303099) (Mesorhizobium loti (strain MAFF 303099)).